The sequence spans 141 residues: Nucleoside diphosphate kinase (141 aa).

ATP-binding residues include K11, F59, R87, T93, R104, and N114. Residue H117 is the Pros-phosphohistidine intermediate of the active site.

The protein belongs to the NDK family. Homotetramer. It depends on Mg(2+) as a cofactor.

Its subcellular location is the cytoplasm. The enzyme catalyses a 2'-deoxyribonucleoside 5'-diphosphate + ATP = a 2'-deoxyribonucleoside 5'-triphosphate + ADP. The catalysed reaction is a ribonucleoside 5'-diphosphate + ATP = a ribonucleoside 5'-triphosphate + ADP. Its function is as follows. Major role in the synthesis of nucleoside triphosphates other than ATP. The ATP gamma phosphate is transferred to the NDP beta phosphate via a ping-pong mechanism, using a phosphorylated active-site intermediate. This chain is Nucleoside diphosphate kinase, found in Cupriavidus pinatubonensis (strain JMP 134 / LMG 1197) (Cupriavidus necator (strain JMP 134)).